The sequence spans 419 residues: UDP-N-acetylglucosamine 1-carboxyvinyltransferase 2 (419 aa).

A phosphoenolpyruvate-binding site is contributed by 24-25 (KN). A UDP-N-acetyl-alpha-D-glucosamine-binding site is contributed by Arg-94. The active-site Proton donor is Cys-118. 2-(S-cysteinyl)pyruvic acid O-phosphothioketal is present on Cys-118. Residues 123–127 (RPIDQ), Asp-307, and Ile-329 contribute to the UDP-N-acetyl-alpha-D-glucosamine site.

Belongs to the EPSP synthase family. MurA subfamily.

It is found in the cytoplasm. It carries out the reaction phosphoenolpyruvate + UDP-N-acetyl-alpha-D-glucosamine = UDP-N-acetyl-3-O-(1-carboxyvinyl)-alpha-D-glucosamine + phosphate. Its pathway is cell wall biogenesis; peptidoglycan biosynthesis. Its function is as follows. Cell wall formation. Adds enolpyruvyl to UDP-N-acetylglucosamine. In Staphylococcus epidermidis (strain ATCC 35984 / DSM 28319 / BCRC 17069 / CCUG 31568 / BM 3577 / RP62A), this protein is UDP-N-acetylglucosamine 1-carboxyvinyltransferase 2.